We begin with the raw amino-acid sequence, 232 residues long: Polycomb group RING finger protein 5-B (232 aa).

The RING-type zinc finger occupies 18-57 (CFVCKGYLIKPTTVTECLHTFCKSCIVQHFEDSNDCPKCG). The segment covering 93-104 (QEDEFWRRKESN) has biased composition (basic and acidic residues). Positions 93 to 128 (QEDEFWRRKESNDENGPMCKKRRVDEEDDDKGDGDY) are disordered.

As to quaternary structure, component of a PRC1-like complex.

It is found in the nucleus. In terms of biological role, component of Polycomb group (PcG) multiprotein complexes; the complex class is required to maintain the transcriptionally repressive state of some genes. This is Polycomb group RING finger protein 5-B (pcgf5b) from Danio rerio (Zebrafish).